Here is a 426-residue protein sequence, read N- to C-terminus: UDP-N-acetylglucosamine 1-carboxyvinyltransferase (426 aa).

Residue 22–23 coordinates phosphoenolpyruvate; the sequence is KN. Arg94 is a binding site for UDP-N-acetyl-alpha-D-glucosamine. The Proton donor role is filled by Cys118. Cys118 carries the post-translational modification 2-(S-cysteinyl)pyruvic acid O-phosphothioketal. UDP-N-acetyl-alpha-D-glucosamine contacts are provided by residues 123–127, Asp310, and Ile332; that span reads RPVDL.

It belongs to the EPSP synthase family. MurA subfamily.

It is found in the cytoplasm. The catalysed reaction is phosphoenolpyruvate + UDP-N-acetyl-alpha-D-glucosamine = UDP-N-acetyl-3-O-(1-carboxyvinyl)-alpha-D-glucosamine + phosphate. Its pathway is cell wall biogenesis; peptidoglycan biosynthesis. Cell wall formation. Adds enolpyruvyl to UDP-N-acetylglucosamine. The sequence is that of UDP-N-acetylglucosamine 1-carboxyvinyltransferase from Hyphomonas neptunium (strain ATCC 15444).